A 1086-amino-acid polypeptide reads, in one-letter code: Ribonuclease 3 (1086 aa).

Disordered regions lie at residues 1–77 (MSDE…DSPR) and 158–233 (CHSM…LRNF). Over residues 13–23 (PKHKRARRKKY) the composition is skewed to basic residues. Basic and acidic residues predominate over residues 24–35 (QKEYQERHKEEM). Residues 43–53 (FQNQPSTSSAP) are compositionally biased toward polar residues. Basic residues predominate over residues 159-168 (HSMKGRKTPK). The span at 181–190 (VSDDSNDSQD) shows a compositional bias: acidic residues. The segment covering 191 to 201 (EASTSEPTNRQ) has biased composition (polar residues). Positions 203 to 217 (PEADKTGEVKDEKQT) are enriched in basic and acidic residues. 2 consecutive RNase III domains span residues 607–781 (LDVF…LDGG) and 833–957 (FHAL…VDRG). Residues E694, N767, E770, E873, D943, and E946 each coordinate Mg(2+). Positions 984–1059 (DAKSHLQQWC…AELALANLES (76 aa)) constitute a DRBM domain.

The protein belongs to the ribonuclease III family. Mg(2+) is required as a cofactor. The cofactor is Mn(2+).

The protein resides in the nucleus. It catalyses the reaction Endonucleolytic cleavage to 5'-phosphomonoester.. Its function is as follows. Executes the initial step of microRNA (miRNA) processing in the nucleus, that is the cleavage of pri-miRNA to release pre-miRNA. Involved in pre-rRNA processing. Cleaves double-strand RNA and does not cleave single-strand RNA. Involved in fertility. Required for the function or synthesis of the let-7 miRNA. The polypeptide is Ribonuclease 3 (drsh-1) (Caenorhabditis elegans).